Consider the following 609-residue polypeptide: PTS system beta-glucoside-specific EIIBCA component (609 aa).

A PTS EIIB type-1 domain is found at 1–86 (MDYDKLSKDI…VRHSNLSDEK (86 aa)). The Phosphocysteine intermediate; for EIIB activity role is filled by Cys-26. Residues 103-459 (DVISGVFTPI…GSQQPAVHEG (357 aa)) enclose the PTS EIIC type-1 domain. The next 10 helical transmembrane spans lie at 112-132 (ILPAIAGAGMIKGLVALAVTF), 141-161 (VHVILTAVGDGAFYFLPLLLA), 174-194 (VAAAIAAAILHPDLTALLGAG), 202-222 (LPVTAATYSSTVIPILLSIWI), 246-266 (FTLLIVVPLTLITVGPLGAIL), 281-301 (AGLVAMILLAGTFSLIIMTGM), 321-341 (LLPAMFLANMGQAGASFAVFL), 351-371 (LALTTSITALMGITEPAMYGV), 379-399 (FAAALIGGAAGGAFYGMTGVA), and 412-432 (IPVFIGPTFIYAMIGLVIAFA). The region spanning 480–584 (DGVFSAGVMG…DVITPVIVTN (105 aa)) is the PTS EIIA type-1 domain. His-532 acts as the Tele-phosphohistidine intermediate; for EIIA activity in catalysis.

Its subcellular location is the cell membrane. In terms of biological role, the phosphoenolpyruvate-dependent sugar phosphotransferase system (sugar PTS), a major carbohydrate active -transport system, catalyzes the phosphorylation of incoming sugar substrates concomitantly with their translocation across the cell membrane. This system is involved in beta-glucoside transport. The polypeptide is PTS system beta-glucoside-specific EIIBCA component (bglP) (Bacillus subtilis (strain 168)).